The primary structure comprises 87 residues: Cytochrome c6 (87 aa).

The heme c site is built by Cys-10, Cys-13, His-14, and Met-56.

This sequence belongs to the cytochrome c family. PetJ subfamily. Monomer. Binds 1 heme c group covalently per subunit.

It is found in the plastid. It localises to the chloroplast thylakoid lumen. Functionally, functions as an electron carrier between membrane-bound cytochrome b6-f and photosystem I in oxygenic photosynthesis. The sequence is that of Cytochrome c6 (petJ) from Euglena viridis (Cercaria viridis).